Reading from the N-terminus, the 80-residue chain is Serine palmitoyltransferase-regulating protein TSC3 (80 aa).

A helical transmembrane segment spans residues 54–74 (FDSFFLHVFFLTIFSLSFFGI).

Interacts with the serine palmitoyltransferase complex LCB1-LCB2. Component of the SPOTS complex, at least composed of LCB1/2 (LCB1 and/or LCB2), ORM1/2 (ORM1 and/or ORM2), SAC1 and TSC3.

It is found in the endoplasmic reticulum membrane. Its function is as follows. Stimulates the activity of serine palmitoyltransferase (SPT), and thus plays a role in the biosynthesis of sphingolipids. The chain is Serine palmitoyltransferase-regulating protein TSC3 (TSC3) from Saccharomyces cerevisiae (strain ATCC 204508 / S288c) (Baker's yeast).